A 289-amino-acid polypeptide reads, in one-letter code: Purine nucleoside phosphorylase (289 aa).

At Met-1 the chain carries N-acetylmethionine. Phosphate is bound by residues Ser-33, His-64, and 84-86 (RFH). Tyr-88 serves as a coordination point for a purine D-ribonucleoside. Ala-116 is a phosphate binding site. A purine D-ribonucleoside-binding residues include Glu-201 and Met-219. Ser-220 is a phosphate binding site. Asn-243 contacts a purine D-ribonucleoside. A Phosphoserine modification is found at Ser-251. His-257 contributes to the a purine D-ribonucleoside binding site.

Belongs to the PNP/MTAP phosphorylase family. In terms of assembly, homotrimer. As to expression, expressed in red blood cells; overexpressed in red blood cells (cytoplasm) of patients with hereditary non-spherocytic hemolytic anemia of unknown etiology.

It localises to the cytoplasm. The enzyme catalyses inosine + phosphate = alpha-D-ribose 1-phosphate + hypoxanthine. It catalyses the reaction guanosine + phosphate = alpha-D-ribose 1-phosphate + guanine. The catalysed reaction is 2'-deoxyguanosine + phosphate = 2-deoxy-alpha-D-ribose 1-phosphate + guanine. It carries out the reaction 2'-deoxyinosine + phosphate = 2-deoxy-alpha-D-ribose 1-phosphate + hypoxanthine. Its pathway is purine metabolism; purine nucleoside salvage. With respect to regulation, inhibited by 5'-deaza-1'-aza-2c-deoxy-1'-(9-methylene)-Immucilin-G (DADMe-ImmG). Functionally, catalyzes the phosphorolytic breakdown of the N-glycosidic bond in the beta-(deoxy)ribonucleoside molecules, with the formation of the corresponding free purine bases and pentose-1-phosphate. Preferentially acts on 6-oxopurine nucleosides including inosine and guanosine. The sequence is that of Purine nucleoside phosphorylase (PNP) from Homo sapiens (Human).